The primary structure comprises 335 residues: ATP-dependent 6-phosphofructokinase (335 aa).

Residue Gly11 participates in ATP binding. 21–25 (RAVVR) lines the ADP pocket. Residues 72-73 (RY) and 102-105 (GDGS) contribute to the ATP site. Asp103 is a binding site for Mg(2+). 125-127 (TID) serves as a coordination point for substrate. Asp127 acts as the Proton acceptor in catalysis. ADP is bound at residue Arg154. Residues Arg162 and 169 to 171 (MGR) each bind substrate. ADP contacts are provided by residues 185-187 (GAD) and 213-215 (KKH). Substrate contacts are provided by residues Glu222, Arg244, and 250–253 (HIQR).

It belongs to the phosphofructokinase type A (PFKA) family. ATP-dependent PFK group I subfamily. Prokaryotic clade 'B1' sub-subfamily. In terms of assembly, homotetramer. Mg(2+) serves as cofactor.

Its subcellular location is the cytoplasm. It catalyses the reaction beta-D-fructose 6-phosphate + ATP = beta-D-fructose 1,6-bisphosphate + ADP + H(+). It functions in the pathway carbohydrate degradation; glycolysis; D-glyceraldehyde 3-phosphate and glycerone phosphate from D-glucose: step 3/4. Its activity is regulated as follows. Allosterically activated by ADP and other diphosphonucleosides, and allosterically inhibited by phosphoenolpyruvate. In terms of biological role, catalyzes the phosphorylation of D-fructose 6-phosphate to fructose 1,6-bisphosphate by ATP, the first committing step of glycolysis. The chain is ATP-dependent 6-phosphofructokinase from Streptococcus pneumoniae serotype 19F (strain G54).